We begin with the raw amino-acid sequence, 553 residues long: Solute carrier family 22 member 2 (553 aa).

Residues 1–21 (MPTVDDILEHIGEFHLFQKQT) lie on the Cytoplasmic side of the membrane. A helical membrane pass occupies residues 22–42 (FFLLALLSGAFTPIYVGIVFL). Topologically, residues 43-150 (GFTPNHHCRS…LVCAHSWMLD (108 aa)) are extracellular. N-linked (GlcNAc...) asparagine glycosylation is present at N71. Residues 151 to 171 (LFQSLVNVGFFIGAVGIGYLA) traverse the membrane as a helical segment. At 172–177 (DRFGRK) the chain is on the cytoplasmic side. The helical transmembrane segment at 178–198 (FCLLVTILINAISGVLMAISP) threads the bilayer. At 199–210 (NYAWMLVFRFLQ) the chain is on the extracellular side. Residues 211-231 (GLVSKAGWLIGYILITEFVGL) form a helical membrane-spanning segment. Residues 232-238 (GYRRTVG) lie on the Cytoplasmic side of the membrane. A helical membrane pass occupies residues 239 to 259 (ICYQIAFTVGLLILAGVAYAL). The Extracellular segment spans residues 260 to 263 (PNWR). Residues 264 to 284 (WLQFAVTLPNFCFLLYFWCIP) traverse the membrane as a helical segment. The short motif at 284–288 (PESPR) is the Proline-rich sequence element. Topologically, residues 285 to 348 (ESPRWLISQN…VRTPQIRKHT (64 aa)) are cytoplasmic. A helical membrane pass occupies residues 349–369 (LILMYNWFTSSVLYQGLIMHM). Residues 370-375 (GLAGDN) lie on the Extracellular side of the membrane. The chain crosses the membrane as a helical span at residues 376–396 (IYLDFFYSALVEFPAAFIIIL). Over 397-404 (TIDRIGRR) the chain is Cytoplasmic. The chain crosses the membrane as a helical span at residues 405–425 (YPWAVSNMVAGAACLASVFIP). Residues 426–432 (DDLQWLK) lie on the Extracellular side of the membrane. The helical transmembrane segment at 433 to 453 (ITVACLGRMGITIAYEMVCLV) threads the bilayer. Topologically, residues 454-464 (NAELYPTYIRN) are cytoplasmic. A helical membrane pass occupies residues 465-485 (LAVLVCSSMCDIGGIVTPFLV). Residues 486 to 494 (YRLTDIWLE) lie on the Extracellular side of the membrane. The chain crosses the membrane as a helical span at residues 495–515 (FPLVVFAVVGLVAGGLVLLLP). The Cytoplasmic segment spans residues 516-553 (ETKGKALPETIEDAEKMQRPRKKKEKRIYLQVKKAELS).

The protein belongs to the major facilitator (TC 2.A.1) superfamily. Organic cation transporter (TC 2.A.1.19) family. Post-translationally, tyrosine phosphorylated by tyrosine-protein kinase YES1. Expressed in kidney and ureter. To a lower extent, also expressed in brain and embryo.

It is found in the basolateral cell membrane. The protein localises to the basal cell membrane. It localises to the apical cell membrane. It carries out the reaction (R)-noradrenaline(out) = (R)-noradrenaline(in). The catalysed reaction is (R)-adrenaline(out) = (R)-adrenaline(in). The enzyme catalyses serotonin(out) = serotonin(in). It catalyses the reaction dopamine(out) = dopamine(in). It carries out the reaction histamine(out) = histamine(in). The catalysed reaction is thiamine(in) = thiamine(out). The enzyme catalyses creatinine(in) = creatinine(out). It catalyses the reaction 1-methylnicotinamide(out) = 1-methylnicotinamide(in). It carries out the reaction guanidine(out) = guanidine(in). The catalysed reaction is choline(out) = choline(in). The enzyme catalyses agmatine(out) = agmatine(in). It catalyses the reaction putrescine(out) = putrescine(in). It carries out the reaction spermidine(in) = spermidine(out). The catalysed reaction is tyramine(in) = tyramine(out). The enzyme catalyses L-histidyl-L-proline diketopiperazine(in) = L-histidyl-L-proline diketopiperazine(out). It catalyses the reaction (R)-salsolinol(in) = (R)-salsolinol(out). It carries out the reaction N-methyl-(R)-salsolinol(in) = N-methyl-(R)-salsolinol(out). The catalysed reaction is acetylcholine(in) = acetylcholine(out). The enzyme catalyses prostaglandin F2alpha(out) = prostaglandin F2alpha(in). It catalyses the reaction prostaglandin E2(out) = prostaglandin E2(in). Tyrosine phosphorylation of the transporter leads to activation of the transport activity. TEA uptake is activated by tyrosine phosphorylation. Inhibited by cGMP, most likely through a cGMP-binding protein that interacts with OCT2. In terms of biological role, electrogenic voltage-dependent transporter that mediates the transport of a variety of organic cations such as endogenous bioactive amines, cationic drugs and xenobiotics. Functions as a Na(+)-independent, bidirectional uniporter. Cation cellular uptake or release is driven by the electrochemical potential, i.e. membrane potential and concentration gradient. However, may also engage electroneutral cation exchange when saturating concentrations of cation substrates are reached. Predominantly expressed at the basolateral membrane of hepatocytes and proximal tubules and involved in the uptake and disposition of cationic compounds by hepatic and renal clearance from the blood flow. Implicated in monoamine neurotransmitters uptake such as histamine, dopamine, adrenaline/epinephrine, noradrenaline/norepinephrine, serotonin and tyramine, thereby supporting a physiological role in the central nervous system by regulating interstitial concentrations of neurotransmitters. Also capable of transporting dopaminergic neuromodulators cyclo(his-pro), salsolinol and N-methyl-salsolinol, thereby involved in the maintenance of dopaminergic cell integrity in the central nervous system. Mediates the bidirectional transport of acetylcholine (ACh) at the apical membrane of ciliated cell in airway epithelium, thereby playing a role in luminal release of ACh from bronchial epithelium. Also transports guanidine and endogenous monoamines such as vitamin B1/thiamine, creatinine and N-1-methylnicotinamide (NMN). Mediates the uptake and efflux of quaternary ammonium compound choline. Mediates the bidirectional transport of polyamine agmatine and the uptake of polyamines putrescine and spermidine. Able to transport non-amine endogenous compounds such as prostaglandin E2 (PGE2) and prostaglandin F2-alpha (PGF2-alpha). Also involved in the uptake of xenobiotic 4-(4-(dimethylamino)styryl)-N-methylpyridinium (ASP). May contribute to regulate the transport of organic compounds in testis across the blood-testis-barrier. The chain is Solute carrier family 22 member 2 from Mus musculus (Mouse).